The sequence spans 525 residues: G-protein regulator 1 (525 aa).

Residues 424–445 (PVDMMDLIFSMSSRMDDQRTEL) enclose the GoLoco domain. Residues 488–525 (HTMNRILKRSKKSKSSLDSTNSMQGDDTRSDDVTMTSK) form a disordered region.

Interacts with gpr-1, lin-5 and GDP-bound goa-1.

It is found in the cytoplasm. It localises to the cell cortex. Its subcellular location is the cytoskeleton. The protein resides in the spindle. In the 1-cell embryo, probably together with gpr-2, controls nuclear rotation and spindle elongation during mitosis. Complex of gpr-1 and gpr-2, in association with lin-5, activates G-protein signaling to affect mitotic spindle force. Polarity determinants (par genes) may regulate lin-5/gpr-1/gpr-2/goa-1 locally to create the asymmetric forces that drive spindle movement. The sequence is that of G-protein regulator 1 (gpr-1) from Caenorhabditis elegans.